Reading from the N-terminus, the 190-residue chain is Small ribosomal subunit protein uS5 (190 aa).

The 64-residue stretch at 22-85 folds into the S5 DRBM domain; that stretch reads FVDKLVHINR…ESAKRNLTRV (64 aa).

This sequence belongs to the universal ribosomal protein uS5 family. As to quaternary structure, part of the 30S ribosomal subunit. Contacts proteins S4 and S8.

In terms of biological role, with S4 and S12 plays an important role in translational accuracy. Its function is as follows. Located at the back of the 30S subunit body where it stabilizes the conformation of the head with respect to the body. The protein is Small ribosomal subunit protein uS5 of Rhodopseudomonas palustris (strain BisB18).